We begin with the raw amino-acid sequence, 154 residues long: MRKQVEIFTDGSCLGNPGPGGYGAVLRYKQHEKALSAGYRLTTNNRMELMAAIAALETLTTDCDIVLSTDSQYVRQGITSWIHNWKKRSWKTADKKPVKNVDLWKRLDTAIQRHSVRWEWVKGHAGHPENERCDELARAAASAPTLDDTGYQAE.

The RNase H type-1 domain maps to 1–142; the sequence is MRKQVEIFTD…CDELARAAAS (142 aa). Residues D10, E48, D70, and D134 each coordinate Mg(2+).

This sequence belongs to the RNase H family. Monomer. The cofactor is Mg(2+).

The protein resides in the cytoplasm. The enzyme catalyses Endonucleolytic cleavage to 5'-phosphomonoester.. Endonuclease that specifically degrades the RNA of RNA-DNA hybrids. This chain is Ribonuclease H, found in Pectobacterium atrosepticum (strain SCRI 1043 / ATCC BAA-672) (Erwinia carotovora subsp. atroseptica).